A 148-amino-acid polypeptide reads, in one-letter code: Small ribosomal subunit protein eS6 (148 aa).

This sequence belongs to the eukaryotic ribosomal protein eS6 family.

The sequence is that of Small ribosomal subunit protein eS6 from Pyrobaculum neutrophilum (strain DSM 2338 / JCM 9278 / NBRC 100436 / V24Sta) (Thermoproteus neutrophilus).